A 330-amino-acid polypeptide reads, in one-letter code: Aspartate--ammonia ligase (330 aa).

This sequence belongs to the class-II aminoacyl-tRNA synthetase family. AsnA subfamily.

Its subcellular location is the cytoplasm. It carries out the reaction L-aspartate + NH4(+) + ATP = L-asparagine + AMP + diphosphate + H(+). Its pathway is amino-acid biosynthesis; L-asparagine biosynthesis; L-asparagine from L-aspartate (ammonia route): step 1/1. The polypeptide is Aspartate--ammonia ligase (Klebsiella pneumoniae (strain 342)).